A 137-amino-acid polypeptide reads, in one-letter code: Large ribosomal subunit protein uL16 (137 aa).

The protein belongs to the universal ribosomal protein uL16 family. As to quaternary structure, part of the 50S ribosomal subunit.

In terms of biological role, binds 23S rRNA and is also seen to make contacts with the A and possibly P site tRNAs. The protein is Large ribosomal subunit protein uL16 of Stenotrophomonas maltophilia (strain R551-3).